The following is a 319-amino-acid chain: tRNA-modifying protein YgfZ (319 aa).

2 residues coordinate folate: tryptophan 27 and tryptophan 189.

It belongs to the tRNA-modifying YgfZ family.

It is found in the cytoplasm. Its function is as follows. Folate-binding protein involved in regulating the level of ATP-DnaA and in the modification of some tRNAs. It is probably a key factor in regulatory networks that act via tRNA modification, such as initiation of chromosomal replication. The polypeptide is tRNA-modifying protein YgfZ (Buchnera aphidicola subsp. Acyrthosiphon pisum (strain APS) (Acyrthosiphon pisum symbiotic bacterium)).